We begin with the raw amino-acid sequence, 1192 residues long: Homeodomain-interacting protein kinase 3 (1192 aa).

Lysine 27 participates in a covalent cross-link: Glycyl lysine isopeptide (Lys-Gly) (interchain with G-Cter in SUMO); alternate. A Glycyl lysine isopeptide (Lys-Gly) (interchain with G-Cter in SUMO2); alternate cross-link involves residue lysine 27. A Protein kinase domain is found at tyrosine 197–valine 525. Residues leucine 203–valine 211 and lysine 226 each bind ATP. Aspartate 322 functions as the Proton acceptor in the catalytic mechanism. Tyrosine 359 carries the phosphotyrosine modification. The interaction with AR stretch occupies residues glutamine 767–serine 921. The segment at asparagine 775 to lysine 868 is interaction with FAS. The segment at cysteine 799 to lysine 829 is disordered. Positions glutamine 832 to methionine 988 are required for localization to nuclear speckles. The tract at residues alanine 843–leucine 895 is SUMO interaction motifs (SIM); required for nuclear localization and kinase activity. The tract at residues isoleucine 847–glutamate 857 is interaction with UBL1. Positions serine 889–serine 906 are enriched in low complexity. Disordered regions lie at residues serine 889 to glutamate 943 and leucine 956 to alanine 1023. Lysine 1185 is covalently cross-linked (Glycyl lysine isopeptide (Lys-Gly) (interchain with G-Cter in SUMO)).

Belongs to the protein kinase superfamily. CMGC Ser/Thr protein kinase family. HIPK subfamily. Interacts with UBL1/SUMO-1. Interacts with and stabilizes ligand-bound androgen receptor (AR). Interacts with Nkx1-2. Interacts with FAS and DAXX. Probably part of a complex consisting of HIPK3, FAS and FADD. Binds to NR5A1/SF1, SPEN/MINT and RUNX2. Post-translationally, autophosphorylated, but autophosphorylation is not required for catalytic activity. May be sumoylated. As to expression, heart, skeletal muscle, spleen, testis and lung.

Its subcellular location is the cytoplasm. The protein resides in the nucleus. The enzyme catalyses L-seryl-[protein] + ATP = O-phospho-L-seryl-[protein] + ADP + H(+). It carries out the reaction L-threonyl-[protein] + ATP = O-phospho-L-threonyl-[protein] + ADP + H(+). Its function is as follows. Serine/threonine-protein kinase involved in transcription regulation, apoptosis and steroidogenic gene expression. Phosphorylates JUN and RUNX2. Seems to negatively regulate apoptosis by promoting FADD phosphorylation. Enhances androgen receptor-mediated transcription. May act as a transcriptional corepressor for NK homeodomain transcription factors. The phosphorylation of NR5A1 activates SF1 leading to increased steroidogenic gene expression upon cAMP signaling pathway stimulation. In osteoblasts, supports transcription activation: phosphorylates RUNX2 that synergizes with SPEN/MINT to enhance FGFR2-mediated activation of the osteocalcin FGF-responsive element (OCFRE). The protein is Homeodomain-interacting protein kinase 3 (Hipk3) of Mus musculus (Mouse).